The sequence spans 475 residues: MAAGAMRGLAVAGGGESSDSDDDGWEIGYLDRAAQKLRGPLPTEEKNETFKKALTTGDISLVQELLDSGISVDTSFRYGWTPLMYAANVANVEMVQVLLDRGANASFSKDKQTILISACSARGTEEQILKCVDLLLSRNADPNMACRRLMTPVMYAARNGHPQVVALLVAHGADVNAQDENGYTALTWAARQGHKHVVLKLLELGANKMIQTKDGKTPSEIAKRNKHVEIFNFLSLTLNPLEGKLQQLTKEETICKLLTTESDKEKDHIFSSYTAFGDLEIFLHGLGLEHMTDLLKERDITLRHLLTMRKDEFAKNGITSRDQQKILAALKELEVEEIKFGELPEVAKLEISGDEFLNFLLKLSKQCGHLITAVQNIITELPVNSHKIVLEWASPRNFTSVCEELVSNVEDLSEEVCKLKDLIQKLQNERENDPTQIPLIEEVSTWNSRILKRTAITVCGFGFVLFICKLTLQRK.

Ser17, Ser18, and Ser20 each carry phosphoserine. ANK repeat units lie at residues Glu45 to Thr74, Tyr78 to Phe107, Asp110 to Met144, Arg148 to Ala177, Asn181 to Ile210, and Asp214 to Gly243. One can recognise an SAM domain in the interval Ser272–Glu334.

Interacts with DDX4, PIWIL1, RANBP9 and TDRD1.

The protein resides in the cytoplasm. Plays a central role during spermatogenesis by repressing transposable elements and preventing their mobilization, which is essential for the germline integrity. Acts via the piRNA metabolic process, which mediates the repression of transposable elements during meiosis by forming complexes composed of piRNAs and Piwi proteins and governs the methylation and subsequent repression of transposons. Its association with pi-bodies suggests a participation in the primary piRNAs metabolic process. Required prior to the pachytene stage to facilitate the production of multiple types of piRNAs, including those associated with repeats involved in the regulation of retrotransposons. May act by mediating protein-protein interactions during germ cell maturation. The protein is Ankyrin repeat, SAM and basic leucine zipper domain-containing protein 1 (ASZ1) of Atelerix albiventris (Middle-African hedgehog).